The following is a 155-amino-acid chain: Small ribosomal subunit protein uS7 (155 aa).

Belongs to the universal ribosomal protein uS7 family. In terms of assembly, part of the 30S ribosomal subunit. Contacts proteins S9 and S11.

Its function is as follows. One of the primary rRNA binding proteins, it binds directly to 16S rRNA where it nucleates assembly of the head domain of the 30S subunit. Is located at the subunit interface close to the decoding center, probably blocks exit of the E-site tRNA. The chain is Small ribosomal subunit protein uS7 from Xanthomonas axonopodis pv. citri (strain 306).